Here is a 150-residue protein sequence, read N- to C-terminus: Large ribosomal subunit protein bL9 (150 aa).

It belongs to the bacterial ribosomal protein bL9 family.

Binds to the 23S rRNA. The sequence is that of Large ribosomal subunit protein bL9 from Clavibacter sepedonicus (Clavibacter michiganensis subsp. sepedonicus).